The primary structure comprises 262 residues: Indole-3-glycerol phosphate synthase (262 aa).

The protein belongs to the TrpC family.

It carries out the reaction 1-(2-carboxyphenylamino)-1-deoxy-D-ribulose 5-phosphate + H(+) = (1S,2R)-1-C-(indol-3-yl)glycerol 3-phosphate + CO2 + H2O. It participates in amino-acid biosynthesis; L-tryptophan biosynthesis; L-tryptophan from chorismate: step 4/5. This is Indole-3-glycerol phosphate synthase from Leptothrix cholodnii (strain ATCC 51168 / LMG 8142 / SP-6) (Leptothrix discophora (strain SP-6)).